The sequence spans 227 residues: Cytochrome c oxidase subunit 2 (227 aa).

The Mitochondrial intermembrane portion of the chain corresponds to 1–14; sequence MAYPFQLGLQDATS. The helical transmembrane segment at 15-45 threads the bilayer; sequence PIMEELTNFHDHTLMIVFLISSLVLYIISLM. Topologically, residues 46-59 are mitochondrial matrix; sequence LTTKLTHTNTMDAQ. Residues 60–87 traverse the membrane as a helical segment; that stretch reads EVETIWTILPAVILILIALPSLRILYMM. Topologically, residues 88 to 227 are mitochondrial intermembrane; sequence DEINNPALTV…HFENWSASMI (140 aa). Positions 161, 196, 198, 200, 204, and 207 each coordinate Cu cation. Mg(2+) is bound at residue E198.

The protein belongs to the cytochrome c oxidase subunit 2 family. In terms of assembly, component of the cytochrome c oxidase (complex IV, CIV), a multisubunit enzyme composed of 14 subunits. The complex is composed of a catalytic core of 3 subunits MT-CO1, MT-CO2 and MT-CO3, encoded in the mitochondrial DNA, and 11 supernumerary subunits COX4I, COX5A, COX5B, COX6A, COX6B, COX6C, COX7A, COX7B, COX7C, COX8 and NDUFA4, which are encoded in the nuclear genome. The complex exists as a monomer or a dimer and forms supercomplexes (SCs) in the inner mitochondrial membrane with NADH-ubiquinone oxidoreductase (complex I, CI) and ubiquinol-cytochrome c oxidoreductase (cytochrome b-c1 complex, complex III, CIII), resulting in different assemblies (supercomplex SCI(1)III(2)IV(1) and megacomplex MCI(2)III(2)IV(2)). Found in a complex with TMEM177, COA6, COX18, COX20, SCO1 and SCO2. Interacts with TMEM177 in a COX20-dependent manner. Interacts with COX20. Interacts with COX16. Cu cation is required as a cofactor.

The protein localises to the mitochondrion inner membrane. It carries out the reaction 4 Fe(II)-[cytochrome c] + O2 + 8 H(+)(in) = 4 Fe(III)-[cytochrome c] + 2 H2O + 4 H(+)(out). Component of the cytochrome c oxidase, the last enzyme in the mitochondrial electron transport chain which drives oxidative phosphorylation. The respiratory chain contains 3 multisubunit complexes succinate dehydrogenase (complex II, CII), ubiquinol-cytochrome c oxidoreductase (cytochrome b-c1 complex, complex III, CIII) and cytochrome c oxidase (complex IV, CIV), that cooperate to transfer electrons derived from NADH and succinate to molecular oxygen, creating an electrochemical gradient over the inner membrane that drives transmembrane transport and the ATP synthase. Cytochrome c oxidase is the component of the respiratory chain that catalyzes the reduction of oxygen to water. Electrons originating from reduced cytochrome c in the intermembrane space (IMS) are transferred via the dinuclear copper A center (CU(A)) of subunit 2 and heme A of subunit 1 to the active site in subunit 1, a binuclear center (BNC) formed by heme A3 and copper B (CU(B)). The BNC reduces molecular oxygen to 2 water molecules using 4 electrons from cytochrome c in the IMS and 4 protons from the mitochondrial matrix. This is Cytochrome c oxidase subunit 2 (MT-CO2) from Sundamys muelleri (Mueller's giant sunda rat).